A 312-amino-acid polypeptide reads, in one-letter code: MAWENQTFNSDFLLLGIFNHSPTHTFLFFLVLAIFSVAFMGNSIMVLLIYLDTQLHTPMYFLLSQLSLMDLMLICTTVPKMAFNYLSGSKSISMAGCATQIFFYISLLGSECFLLAVMSYDRYTAICHPLRYTNLMRPKICGLMTAFSWILGSTDGIIDAVATFSFSYCGSREIAHFCCDFPSLLILSCNDTSIFEEVIFICCIVMLVFPVAIIITSYARVILAVIHMGSGEGRRKAFTTCSSHLMVVGMYYGAGLFMCIQPTSHHSPMQDKMVSVFYTIVTPMLNPLIYSLRNKEVTRALMKILGKGKSGD.

Topologically, residues 1-25 (MAWENQTFNSDFLLLGIFNHSPTHT) are extracellular. A glycan (N-linked (GlcNAc...) asparagine) is linked at asparagine 5. A helical membrane pass occupies residues 26–49 (FLFFLVLAIFSVAFMGNSIMVLLI). The Cytoplasmic portion of the chain corresponds to 50–57 (YLDTQLHT). A helical transmembrane segment spans residues 58 to 79 (PMYFLLSQLSLMDLMLICTTVP). Residues 80-100 (KMAFNYLSGSKSISMAGCATQ) are Extracellular-facing. Cysteine 97 and cysteine 189 are disulfide-bonded. A helical transmembrane segment spans residues 101 to 120 (IFFYISLLGSECFLLAVMSY). Residues 121-139 (DRYTAICHPLRYTNLMRPK) lie on the Cytoplasmic side of the membrane. A helical transmembrane segment spans residues 140-158 (ICGLMTAFSWILGSTDGII). Topologically, residues 159–195 (DAVATFSFSYCGSREIAHFCCDFPSLLILSCNDTSIF) are extracellular. The chain crosses the membrane as a helical span at residues 196 to 219 (EEVIFICCIVMLVFPVAIIITSYA). Over 220–236 (RVILAVIHMGSGEGRRK) the chain is Cytoplasmic. The helical transmembrane segment at 237-259 (AFTTCSSHLMVVGMYYGAGLFMC) threads the bilayer. The Extracellular segment spans residues 260 to 272 (IQPTSHHSPMQDK). The chain crosses the membrane as a helical span at residues 273 to 292 (MVSVFYTIVTPMLNPLIYSL). The Cytoplasmic portion of the chain corresponds to 293-311 (RNKEVTRALMKILGKGKSG).

It belongs to the G-protein coupled receptor 1 family.

It localises to the cell membrane. Functionally, odorant receptor. This is Olfactory receptor 2M7 (OR2M7) from Homo sapiens (Human).